A 51-amino-acid chain; its full sequence is Glutamate dehydrogenase (51 aa).

A substrate-binding site is contributed by Lys31.

The protein belongs to the Glu/Leu/Phe/Val dehydrogenases family. In terms of assembly, homohexamer.

The protein localises to the mitochondrion matrix. It catalyses the reaction L-glutamate + NAD(+) + H2O = 2-oxoglutarate + NH4(+) + NADH + H(+). The enzyme catalyses L-glutamate + NADP(+) + H2O = 2-oxoglutarate + NH4(+) + NADPH + H(+). Its function is as follows. Mitochondrial glutamate dehydrogenase that converts L-glutamate into alpha-ketoglutarate. Plays a key role in glutamine anaplerosis by producing alpha-ketoglutarate, an important intermediate in the tricarboxylic acid cycle. This is Glutamate dehydrogenase from Electrophorus electricus (Electric eel).